The sequence spans 297 residues: Large ribosomal subunit protein uL18 (297 aa).

Residues 258 to 267 (KKAHPKKRWT) are compositionally biased toward basic residues. The segment at 258 to 277 (KKAHPKKRWTEKKLTREQRQ) is disordered. A compositionally biased stretch (basic and acidic residues) spans 268 to 277 (EKKLTREQRQ).

The protein belongs to the universal ribosomal protein uL18 family. In terms of assembly, component of the large ribosomal subunit (LSU).

The protein localises to the cytoplasm. Its subcellular location is the nucleus. Its function is as follows. Component of the ribosome, a large ribonucleoprotein complex responsible for the synthesis of proteins in the cell. The small ribosomal subunit (SSU) binds messenger RNAs (mRNAs) and translates the encoded message by selecting cognate aminoacyl-transfer RNA (tRNA) molecules. The large subunit (LSU) contains the ribosomal catalytic site termed the peptidyl transferase center (PTC), which catalyzes the formation of peptide bonds, thereby polymerizing the amino acids delivered by tRNAs into a polypeptide chain. The nascent polypeptides leave the ribosome through a tunnel in the LSU and interact with protein factors that function in enzymatic processing, targeting, and the membrane insertion of nascent chains at the exit of the ribosomal tunnel. In Helianthus annuus (Common sunflower), this protein is Large ribosomal subunit protein uL18 (RPL5A).